Here is a 299-residue protein sequence, read N- to C-terminus: MTDESKPTDDQPTSKGRQGARWGQERRLEFIDYRLRWDGQINRSSLTDFFGISVPQASLDITEYAKLAESNLEYDTRARVYRATESFKAVFPSSAVERYLDDLLRVAVQPEIPYGSFLGWQSPVAAVPKLGRRLNADIVGVILRAIRETGFIEVFYQSLTDPEGGERMLSPHALVHDGNRWHVRAYCHKRKAFRDFSLTRIKCCKYVGQDRDRADEDYAWNTMVNVVLTPHPGLTPAQRKLIENDFLMEGGEMHVECRRALLLYLLFQLNLNEDQADQRPEVIQLALKNRDEIKDLIQY.

The tract at residues 1–22 is disordered; the sequence is MTDESKPTDDQPTSKGRQGARW. A winged HTH domain region spans residues 1–95; sequence MTDESKPTDD…SFKAVFPSSA (95 aa). The interval 96 to 207 is WYL domain; the sequence is VERYLDDLLR…LTRIKCCKYV (112 aa). Residues 131–211 form the WYL domain; sequence GRRLNADIVG…KCCKYVGQDR (81 aa). The interval 156–200 is probable ligand-binding region; the sequence is YQSLTDPEGGERMLSPHALVHDGNRWHVRAYCHKRKAFRDFSLTR. The WCX domain stretch occupies residues 208 to 299; sequence GQDRDRADED…RDEIKDLIQY (92 aa).

Homodimer.

In terms of biological role, transcriptional regulator of a CBASS antivirus system. CBASS (cyclic oligonucleotide-based antiphage signaling system) provides immunity against bacteriophage. The CD-NTase protein synthesizes cyclic nucleotides in response to infection; these serve as specific second messenger signals. The signals activate a diverse range of effectors, leading to bacterial cell death and thus abortive phage infection. A type III CBASS system, part of a Cap17-CapW-CdnC-Cap7-Cap6-Cap18 locus. Binds specifically to palindromes that overlap the -10 site in the promoter of cdnC, found between the genes for divergently transcribed capW and cdnC (cognate DNA). Probably represses transcription bidirectionally from the promoter. The protein is DNA-binding transcriptional repressor CapW of Pseudomonas aeruginosa.